Reading from the N-terminus, the 323-residue chain is Pyruvate dehydrogenase E1 component subunit beta (323 aa).

E60 contributes to the thiamine diphosphate binding site. 5 residues coordinate K(+): I113, A161, I162, D164, and N166.

In terms of assembly, heterodimer of an alpha and a beta chain. Requires thiamine diphosphate as cofactor.

The protein localises to the plastid. It localises to the chloroplast. It carries out the reaction N(6)-[(R)-lipoyl]-L-lysyl-[protein] + pyruvate + H(+) = N(6)-[(R)-S(8)-acetyldihydrolipoyl]-L-lysyl-[protein] + CO2. Functionally, the pyruvate dehydrogenase complex catalyzes the overall conversion of pyruvate to acetyl-CoA and CO(2). It contains multiple copies of three enzymatic components: pyruvate dehydrogenase (E1), dihydrolipoamide acetyltransferase (E2) and lipoamide dehydrogenase (E3). The protein is Pyruvate dehydrogenase E1 component subunit beta (pdhB) of Gracilaria tenuistipitata var. liui (Red alga).